Reading from the N-terminus, the 341-residue chain is Probable long-chain-alcohol O-fatty-acyltransferase 1 (341 aa).

The next 8 membrane-spanning stretches (helical) occupy residues 7–27 (NLIE…YISS), 36–56 (LLSI…LSCV), 58–78 (FCAI…LLFA), 120–140 (PMPK…LHVY), 149–169 (FVVL…VLVF), 233–253 (MFAG…LLYF), 261–281 (TWEV…EIAV), and 293–313 (AVSG…LFLA).

Belongs to the wax synthase family.

The protein resides in the membrane. The catalysed reaction is a long chain fatty alcohol + a fatty acyl-CoA = a wax ester + CoA. Its function is as follows. Catalyzes the final step in the synthesis of long-chain linear esters (waxes). The sequence is that of Probable long-chain-alcohol O-fatty-acyltransferase 1 (AT1) from Arabidopsis thaliana (Mouse-ear cress).